The following is a 172-amino-acid chain: Bone marrow stromal antigen 2 (172 aa).

The Cytoplasmic portion of the chain corresponds to 1–30; it reads MAPSFYHYLPVPMDEMGGKQGWGSHRQWLG. A helical; Signal-anchor for type II membrane protein membrane pass occupies residues 31–51; sequence AAILVVLFGVTLVILTIYFAV. Residues 52–152 are Extracellular-facing; it reads TANSVACRDG…ETSSTVQVNS (101 aa). A glycan (N-linked (GlcNAc...) asparagine) is linked at asparagine 70. Residues 74 to 147 are a coiled coil; it reads LLQRQLTRTQ…LRIQKETSST (74 aa). Residue asparagine 94 is glycosylated (N-linked (GlcNAc...) asparagine; atypical). The N-linked (GlcNAc...) asparagine glycan is linked to asparagine 97. The GPI-anchor amidated serine moiety is linked to residue serine 152. Positions 153 to 172 are cleaved as a propeptide — removed in mature form; that stretch reads GSSMVVSSLLVLKVSLFLLF.

As to quaternary structure, parallel homodimer; disulfide-linked. May form homotetramers under reducing conditions. Isoform 1 and isoform 2 form homodimers and also heterodimers with each other. Dimerization is essential for its antiviral activity. Interacts (via cytoplasmic domain) with ARHGAP44. Interacts with MMP14 (via C-terminal cytoplasmic tail). Interacts with LILRA4/ILT7. Interacts with RNF115. In terms of tissue distribution, in naive mice, specifically expressed on type I interferon-producing cells (at protein level).

Its subcellular location is the golgi apparatus. The protein localises to the trans-Golgi network. It is found in the cell membrane. It localises to the late endosome. The protein resides in the membrane raft. Its subcellular location is the cytoplasm. The protein localises to the apical cell membrane. IFN-induced antiviral host restriction factor which efficiently blocks the release of diverse mammalian enveloped viruses by directly tethering nascent virions to the membranes of infected cells. Acts as a direct physical tether, holding virions to the cell membrane and linking virions to each other. The tethered virions can be internalized by endocytosis and subsequently degraded or they can remain on the cell surface. In either case, their spread as cell-free virions is restricted. Its target viruses belong to diverse families, including retroviridae: human immunodeficiency virus type 1 (HIV-1), mouse mammary tumor virus (MMTV) and murine leukemia virus (MLV), filoviridae: ebola virus (EBOV), arenaviridae: lassa virus (LASV), and rhabdoviridae: vesicular stomatitis virus (VSV). Can inhibit cell surface proteolytic activity of MMP14 causing decreased activation of MMP15 which results in inhibition of cell growth and migration. Can stimulate signaling by LILRA4/ILT7 and consequently provide negative feedback to the production of IFN by plasmacytoid dendritic cells in response to viral infection. Plays a role in the organization of the subapical actin cytoskeleton in polarized epithelial cells. This is Bone marrow stromal antigen 2 (Bst2) from Mus musculus (Mouse).